The following is a 183-amino-acid chain: Large ribosomal subunit protein uL6 (183 aa).

Belongs to the universal ribosomal protein uL6 family. Part of the 50S ribosomal subunit.

This protein binds to the 23S rRNA, and is important in its secondary structure. It is located near the subunit interface in the base of the L7/L12 stalk, and near the tRNA binding site of the peptidyltransferase center. This is Large ribosomal subunit protein uL6 from Malacoplasma penetrans (strain HF-2) (Mycoplasma penetrans).